The sequence spans 348 residues: Protein DMR6-LIKE OXYGENASE 2 (348 aa).

The Fe2OG dioxygenase domain maps to 194–294 (KHGQHMAINY…RISIPTFYCP (101 aa)). The Fe cation site is built by histidine 219, aspartate 221, and histidine 275. Arginine 285 is a binding site for 2-oxoglutarate.

The protein belongs to the iron/ascorbate-dependent oxidoreductase family. It depends on Fe(2+) as a cofactor.

The enzyme catalyses salicylate + NADH + O2 + H(+) = 2,3-dihydroxybenzoate + NAD(+) + H2O. Functionally, converts salicylic acid (SA) to 2,3-dihydroxybenzoic acid (2,3-DHBA). Negative regulator of defense against Hyaloperonospora arabidopsidis. (Microbial infection) Confers susceptibility to the downy mildew pathogen Hyaloperonospora arabidopsidis. This Arabidopsis thaliana (Mouse-ear cress) protein is Protein DMR6-LIKE OXYGENASE 2.